A 610-amino-acid chain; its full sequence is tRNA uridine 5-carboxymethylaminomethyl modification enzyme MnmG (610 aa).

14 to 19 (GAGHAG) is a binding site for FAD. An NAD(+)-binding site is contributed by 274–288 (GPRYCPSIEDKIVKF).

It belongs to the MnmG family. In terms of assembly, homodimer. Heterotetramer of two MnmE and two MnmG subunits. FAD serves as cofactor.

The protein localises to the cytoplasm. In terms of biological role, NAD-binding protein involved in the addition of a carboxymethylaminomethyl (cmnm) group at the wobble position (U34) of certain tRNAs, forming tRNA-cmnm(5)s(2)U34. The sequence is that of tRNA uridine 5-carboxymethylaminomethyl modification enzyme MnmG from Chlamydia trachomatis serovar L2b (strain UCH-1/proctitis).